The chain runs to 804 residues: Probable phosphoketolase (804 aa).

This sequence belongs to the XFP family. Requires thiamine diphosphate as cofactor.

The chain is Probable phosphoketolase from Mycolicibacterium paratuberculosis (strain ATCC BAA-968 / K-10) (Mycobacterium paratuberculosis).